We begin with the raw amino-acid sequence, 391 residues long: MAKKTNYVKNGKEYYRVTVTIGRDENGKLIRKEFYGKTKKEAEAKKEEYLNGIRNGLNVDFQDVTLGDLMHTWLFEVVRMSRKPATFVKYEGHYRNYIKNSELYGMKISIIKSIQIQRYYNKLYQQGKSSKTIKALNNFLKTFFNYAVDEGYLAKNPCTGKKIVIPGTPEEKIETEIETFSDEEIKKIKEALKGHRLKALFLLAFGTGLRQGELLGLKWTDIDFEKKELRVQRMIKQVTIIDEKGNRKYKTIEQIPKTKNSIRTVPIPSSLIPMLKEHRNRQREEKLKAGSVYLNDVEKGYVFTTELGNTIDASNLLKTYKKILNRAGVPYRKFHAIRHTYATKLFERGVPLKTVSELLGHSNISITANIYTHVIPKQKTNAVETLNDLFI.

Residues 64–148 (VTLGDLMHTW…FLKTFFNYAV (85 aa)) form the Core-binding (CB) domain. The Tyr recombinase domain maps to 175 to 384 (TEIETFSDEE…IPKQKTNAVE (210 aa)). Active-site residues include Arg210, Lys244, His335, Arg338, and His361. The active-site O-(3'-phospho-DNA)-tyrosine intermediate is the Tyr371.

This sequence belongs to the 'phage' integrase family.

It is found in the cytoplasm. Its function is as follows. Site-specific tyrosine recombinase, which acts by catalyzing the cutting and rejoining of the recombining DNA molecules. The chain is Tyrosine recombinase XerC-like from Caldanaerobacter subterraneus subsp. tengcongensis (strain DSM 15242 / JCM 11007 / NBRC 100824 / MB4) (Thermoanaerobacter tengcongensis).